A 360-amino-acid polypeptide reads, in one-letter code: 3-dehydroquinate synthase (360 aa).

NAD(+) contacts are provided by residues 72 to 77 (DGEEYK), 106 to 110 (GVIGD), 130 to 131 (TT), K143, and K152. Zn(2+)-binding residues include E185, H248, and H265.

It belongs to the sugar phosphate cyclases superfamily. Dehydroquinate synthase family. Requires Co(2+) as cofactor. Zn(2+) serves as cofactor. NAD(+) is required as a cofactor.

Its subcellular location is the cytoplasm. The catalysed reaction is 7-phospho-2-dehydro-3-deoxy-D-arabino-heptonate = 3-dehydroquinate + phosphate. It functions in the pathway metabolic intermediate biosynthesis; chorismate biosynthesis; chorismate from D-erythrose 4-phosphate and phosphoenolpyruvate: step 2/7. Functionally, catalyzes the conversion of 3-deoxy-D-arabino-heptulosonate 7-phosphate (DAHP) to dehydroquinate (DHQ). This chain is 3-dehydroquinate synthase, found in Geotalea uraniireducens (strain Rf4) (Geobacter uraniireducens).